A 67-amino-acid chain; its full sequence is Conotoxin LiC33 (67 aa).

Residues 1 to 22 (MRCVPVFIILLLLSPSAPSVDA) form the signal peptide. The propeptide occupies 23–48 (HPKTKDDVPLASFHDDAKRTLQRLWI). Phenylalanine 63 bears the Phenylalanine amide mark. Residues 65–67 (KGK) constitute a propeptide that is removed on maturation.

It belongs to the conotoxin T superfamily. Post-translationally, contains 2 disulfide bonds that can be either 'C1-C3, C2-C4' or 'C1-C4, C2-C3', since these disulfide connectivities have been observed for conotoxins with cysteine framework V (for examples, see AC P0DQQ7 and AC P81755). Expressed by the venom duct.

It localises to the secreted. This is Conotoxin LiC33 from Conus lividus (Livid cone).